Reading from the N-terminus, the 698-residue chain is PWWP domain-containing DNA repair factor 3A (698 aa).

Disordered stretches follow at residues 102 to 145 and 159 to 386; these read TSLS…EDDQ and CSPK…EEPP. S105 is modified (phosphoserine). The segment covering 129–139 has biased composition (polar residues); the sequence is SQVSSAPSPSF. Residues S165, S168, and S170 each carry the phosphoserine modification. Polar residues predominate over residues 200-211; the sequence is DESQNGSGSQLD. Composition is skewed to basic and acidic residues over residues 212-235 and 341-350; these read HGQE…RGKA and RAGDSDRPEE. S355 and S356 each carry phosphoserine. Residues 370 to 384 are compositionally biased toward acidic residues; the sequence is EEEEEEEEEEEEEEE. The 62-residue stretch at 399–460 folds into the PWWP domain; it reads VGMLVWLKYQ…KHFDCKEKHA (62 aa).

This sequence belongs to the PWWP3A family. In terms of assembly, interacts with TP53BP1 (via BRCT domain); the interaction is not dependent on its phosphorylation status. Binds nucleosomes. Interacts with trimethylated 'Lys-36' of histone H3 (H3K36me3) (in vitro).

Its subcellular location is the nucleus. Involved in the DNA damage response pathway by contributing to the maintenance of chromatin architecture. Recruited to the vicinity of DNA breaks by TP53BP1 and plays an accessory role to facilitate damage-induced chromatin changes and promoting chromatin relaxation. Required for efficient DNA repair and cell survival following DNA damage. The sequence is that of PWWP domain-containing DNA repair factor 3A from Rattus norvegicus (Rat).